A 240-amino-acid polypeptide reads, in one-letter code: Pyridoxine 5'-phosphate synthase (240 aa).

Asn-7 is a 3-amino-2-oxopropyl phosphate binding site. 9 to 10 provides a ligand contact to 1-deoxy-D-xylulose 5-phosphate; the sequence is DH. Arg-18 is a 3-amino-2-oxopropyl phosphate binding site. The active-site Proton acceptor is the His-43. 1-deoxy-D-xylulose 5-phosphate contacts are provided by Arg-45 and His-50. The active-site Proton acceptor is the Glu-70. Residue Thr-100 participates in 1-deoxy-D-xylulose 5-phosphate binding. Residue His-191 is the Proton donor of the active site. 3-amino-2-oxopropyl phosphate contacts are provided by residues Gly-192 and 213–214; that span reads GH.

It belongs to the PNP synthase family. Homooctamer; tetramer of dimers.

Its subcellular location is the cytoplasm. It carries out the reaction 3-amino-2-oxopropyl phosphate + 1-deoxy-D-xylulose 5-phosphate = pyridoxine 5'-phosphate + phosphate + 2 H2O + H(+). It participates in cofactor biosynthesis; pyridoxine 5'-phosphate biosynthesis; pyridoxine 5'-phosphate from D-erythrose 4-phosphate: step 5/5. In terms of biological role, catalyzes the complicated ring closure reaction between the two acyclic compounds 1-deoxy-D-xylulose-5-phosphate (DXP) and 3-amino-2-oxopropyl phosphate (1-amino-acetone-3-phosphate or AAP) to form pyridoxine 5'-phosphate (PNP) and inorganic phosphate. The protein is Pyridoxine 5'-phosphate synthase of Microcystis aeruginosa (strain NIES-843 / IAM M-2473).